A 259-amino-acid chain; its full sequence is Imidazole glycerol phosphate synthase subunit HisF (259 aa).

Residues Asp11 and Asp130 contribute to the active site.

It belongs to the HisA/HisF family. As to quaternary structure, heterodimer of HisH and HisF.

The protein resides in the cytoplasm. The enzyme catalyses 5-[(5-phospho-1-deoxy-D-ribulos-1-ylimino)methylamino]-1-(5-phospho-beta-D-ribosyl)imidazole-4-carboxamide + L-glutamine = D-erythro-1-(imidazol-4-yl)glycerol 3-phosphate + 5-amino-1-(5-phospho-beta-D-ribosyl)imidazole-4-carboxamide + L-glutamate + H(+). It functions in the pathway amino-acid biosynthesis; L-histidine biosynthesis; L-histidine from 5-phospho-alpha-D-ribose 1-diphosphate: step 5/9. In terms of biological role, IGPS catalyzes the conversion of PRFAR and glutamine to IGP, AICAR and glutamate. The HisF subunit catalyzes the cyclization activity that produces IGP and AICAR from PRFAR using the ammonia provided by the HisH subunit. This Desulforapulum autotrophicum (strain ATCC 43914 / DSM 3382 / VKM B-1955 / HRM2) (Desulfobacterium autotrophicum) protein is Imidazole glycerol phosphate synthase subunit HisF.